Consider the following 702-residue polypeptide: DNA ligase (702 aa).

NAD(+) is bound by residues 32–36 (DAEYD) and 81–82 (SL). The interval 104–125 (AESSAQKASLNPLVRDSDQKNR) is disordered. E139 lines the NAD(+) pocket. K141 functions as the N6-AMP-lysine intermediate in the catalytic mechanism. The NAD(+) site is built by R162, E199, K316, and K340. C434, C437, C452, and C458 together coordinate Zn(2+). Positions 616–702 (KPNHPFRDKT…KALKPEGTKV (87 aa)) constitute a BRCT domain.

This sequence belongs to the NAD-dependent DNA ligase family. LigA subfamily. It depends on Mg(2+) as a cofactor. Mn(2+) serves as cofactor.

The catalysed reaction is NAD(+) + (deoxyribonucleotide)n-3'-hydroxyl + 5'-phospho-(deoxyribonucleotide)m = (deoxyribonucleotide)n+m + AMP + beta-nicotinamide D-nucleotide.. In terms of biological role, DNA ligase that catalyzes the formation of phosphodiester linkages between 5'-phosphoryl and 3'-hydroxyl groups in double-stranded DNA using NAD as a coenzyme and as the energy source for the reaction. It is essential for DNA replication and repair of damaged DNA. The sequence is that of DNA ligase from Hamiltonella defensa subsp. Acyrthosiphon pisum (strain 5AT).